We begin with the raw amino-acid sequence, 743 residues long: Polyribonucleotide nucleotidyltransferase (743 aa).

Residues aspartate 494 and aspartate 500 each contribute to the Mg(2+) site. Residues 561-620 form the KH domain; that stretch reads PQHAEVFVNPDIIRLIIGPGGKNIKAITAATGASVDIEDSGRVSIFAPTAEALEKAREMV. In terms of domain architecture, S1 motif spans 630 to 704; sequence GKNYNAKVRK…SRKAVLLEEQ (75 aa). The disordered stretch occupies residues 702-743; it reads EEQGHPWNPEDTARPQRSDRGDRGDRRGDRGGRDRRDRGDRR. Over residues 712 to 743 the composition is skewed to basic and acidic residues; it reads DTARPQRSDRGDRGDRRGDRGGRDRRDRGDRR.

This sequence belongs to the polyribonucleotide nucleotidyltransferase family. Requires Mg(2+) as cofactor.

The protein localises to the cytoplasm. It catalyses the reaction RNA(n+1) + phosphate = RNA(n) + a ribonucleoside 5'-diphosphate. Its function is as follows. Involved in mRNA degradation. Catalyzes the phosphorolysis of single-stranded polyribonucleotides processively in the 3'- to 5'-direction. In Desulfovibrio desulfuricans (strain ATCC 27774 / DSM 6949 / MB), this protein is Polyribonucleotide nucleotidyltransferase.